Here is a 161-residue protein sequence, read N- to C-terminus: Nucleotide-binding protein amb3630 (161 aa).

This sequence belongs to the YajQ family.

Nucleotide-binding protein. The chain is Nucleotide-binding protein amb3630 from Paramagnetospirillum magneticum (strain ATCC 700264 / AMB-1) (Magnetospirillum magneticum).